We begin with the raw amino-acid sequence, 88 residues long: Protein U62 (88 aa).

The chain is Protein U62 from Elephantid herpesvirus 1 (isolate Asian elephant/Berlin/Kiba/1998) (EIHV-1).